The sequence spans 410 residues: Arginine deiminase (410 aa).

Catalysis depends on Cys-400, which acts as the Amidino-cysteine intermediate.

The protein belongs to the arginine deiminase family.

It localises to the cytoplasm. The enzyme catalyses L-arginine + H2O = L-citrulline + NH4(+). It participates in amino-acid degradation; L-arginine degradation via ADI pathway; carbamoyl phosphate from L-arginine: step 1/2. The sequence is that of Arginine deiminase (arcA) from Lactococcus lactis subsp. lactis (strain IL1403) (Streptococcus lactis).